Reading from the N-terminus, the 149-residue chain is Deoxyuridine 5'-triphosphate nucleotidohydrolase (149 aa).

Substrate contacts are provided by residues 68–70, N81, 85–87, and M95; these read RSG and LID.

This sequence belongs to the dUTPase family. It depends on Mg(2+) as a cofactor.

It catalyses the reaction dUTP + H2O = dUMP + diphosphate + H(+). Its pathway is pyrimidine metabolism; dUMP biosynthesis; dUMP from dCTP (dUTP route): step 2/2. Its function is as follows. This enzyme is involved in nucleotide metabolism: it produces dUMP, the immediate precursor of thymidine nucleotides and it decreases the intracellular concentration of dUTP so that uracil cannot be incorporated into DNA. This chain is Deoxyuridine 5'-triphosphate nucleotidohydrolase, found in Bordetella avium (strain 197N).